The sequence spans 545 residues: Glutamine-dependent NAD(+) synthetase (545 aa).

Positions 5 to 247 (LRIAMAQFDF…DQWLVVDYMR (243 aa)) constitute a CN hydrolase domain. Glutamate 46 acts as the Proton acceptor; for glutaminase activity in catalysis. Residue lysine 113 is the For glutaminase activity of the active site. Tyrosine 119 contributes to the L-glutamine binding site. Catalysis depends on cysteine 151, which acts as the Nucleophile; for glutaminase activity. L-glutamine is bound by residues serine 177 and lysine 183. The segment at 269–545 (VWRAVVRGVQ…RYPISNAYRG (277 aa)) is ligase. An ATP-binding site is contributed by 292 to 299 (GLSGGIDS). Asparagine 375 is a binding site for deamido-NAD(+). Residue threonine 399 participates in ATP binding. Deamido-NAD(+) is bound by residues glutamate 404 and lysine 516.

This sequence in the C-terminal section; belongs to the NAD synthetase family.

The enzyme catalyses deamido-NAD(+) + L-glutamine + ATP + H2O = L-glutamate + AMP + diphosphate + NAD(+) + H(+). Its pathway is cofactor biosynthesis; NAD(+) biosynthesis; NAD(+) from deamido-NAD(+) (L-Gln route): step 1/1. Functionally, catalyzes the ATP-dependent amidation of deamido-NAD to form NAD. Uses L-glutamine as a nitrogen source. In Xylella fastidiosa (strain 9a5c), this protein is Glutamine-dependent NAD(+) synthetase.